Consider the following 148-residue polypeptide: Caltractin (148 aa).

4 consecutive EF-hand domains span residues 4–39 (EQKQ…LGFE), 40–75 (PKKE…KMGE), 77–112 (DSRE…LGEN), and 113–148 (MTDE…TSLF). Ca(2+) contacts are provided by Asp-17, Asp-19, Ser-21, Thr-23, Glu-28, Asp-53, Asp-55, Ser-57, Thr-59, and Glu-64. Asp-126, Asp-128, Asp-130, Glu-132, and Glu-137 together coordinate Ca(2+).

It belongs to the centrin family. Ubiquitous.

Functionally, this calcium-binding protein is found in the basal body complexes (the functional homolog of the centrosome in animal cell). In mitotic cells it is specifically associated with the poles of the mitotic spindles at the sites of the duplicated basal body complexes. This Tetraselmis striata (Green microalga) protein is Caltractin.